A 91-amino-acid polypeptide reads, in one-letter code: UPF0250 protein Lcho_4239 (91 aa).

Belongs to the UPF0250 family.

This Leptothrix cholodnii (strain ATCC 51168 / LMG 8142 / SP-6) (Leptothrix discophora (strain SP-6)) protein is UPF0250 protein Lcho_4239.